The following is an 87-amino-acid chain: MKTKLNELLEFPCSFTYKVMGLAQPELVDQVVEVVQRHAPGDYNPQVKPSSKGNYHSVSITITATHIDQVETLYDELGNIEIVRMVL.

The protein belongs to the UPF0250 family.

In Serratia proteamaculans (strain 568), this protein is UPF0250 protein Spro_1197.